Consider the following 476-residue polypeptide: Glutamate--tRNA ligase (476 aa).

The 'HIGH' region motif lies at Pro9–Thr19. The 'KMSKS' region motif lies at Lys248 to Arg252. Lys251 contacts ATP.

The protein belongs to the class-I aminoacyl-tRNA synthetase family. Glutamate--tRNA ligase type 1 subfamily. In terms of assembly, monomer.

The protein resides in the cytoplasm. The enzyme catalyses tRNA(Glu) + L-glutamate + ATP = L-glutamyl-tRNA(Glu) + AMP + diphosphate. Catalyzes the attachment of glutamate to tRNA(Glu) in a two-step reaction: glutamate is first activated by ATP to form Glu-AMP and then transferred to the acceptor end of tRNA(Glu). The chain is Glutamate--tRNA ligase from Prochlorococcus marinus (strain MIT 9303).